We begin with the raw amino-acid sequence, 470 residues long: Ribulose bisphosphate carboxylase large chain (470 aa).

Residues asparagine 115 and threonine 165 each contribute to the substrate site. Catalysis depends on lysine 167, which acts as the Proton acceptor. Lysine 169 is a substrate binding site. The Mg(2+) site is built by lysine 193, aspartate 195, and glutamate 196. Lysine 193 is subject to N6-carboxylysine. Residue histidine 286 is the Proton acceptor of the active site. Arginine 287, histidine 319, and serine 371 together coordinate substrate.

The protein belongs to the RuBisCO large chain family. Type I subfamily. As to quaternary structure, heterohexadecamer of 8 large chains and 8 small chains. Mg(2+) is required as a cofactor.

The protein localises to the carboxysome. The enzyme catalyses 2 (2R)-3-phosphoglycerate + 2 H(+) = D-ribulose 1,5-bisphosphate + CO2 + H2O. It carries out the reaction D-ribulose 1,5-bisphosphate + O2 = 2-phosphoglycolate + (2R)-3-phosphoglycerate + 2 H(+). RuBisCO catalyzes two reactions: the carboxylation of D-ribulose 1,5-bisphosphate, the primary event in carbon dioxide fixation, as well as the oxidative fragmentation of the pentose substrate in the photorespiration process. Both reactions occur simultaneously and in competition at the same active site. This is Ribulose bisphosphate carboxylase large chain from Synechococcus sp. (strain CC9311).